The sequence spans 248 residues: uncharacterized protein (248 aa).

6 helical membrane-spanning segments follow: residues 65–85 (IIIYGVILQIYTTILFKQFLT), 105–125 (SITSFFYNGFCHVAVMIILWY), 126–146 (ISWTLIDYGTLVIAIMILGFI), 156–176 (LCCFIAIFTSIVHSTFFTLLI), 188–208 (LILNLTFLTITYILMILSDYS), and 222–242 (VIYIYCIQIIILQFIFIYKYT).

It localises to the cell membrane. This is an uncharacterized protein from Rickettsia prowazekii (strain Madrid E).